Here is a 361-residue protein sequence, read N- to C-terminus: Phospho-N-acetylmuramoyl-pentapeptide-transferase (361 aa).

Helical transmembrane passes span glycine 27 to leucine 47, threonine 72 to alanine 92, leucine 94 to phenylalanine 114, alanine 133 to glycine 153, leucine 169 to glycine 189, glycine 200 to serine 220, valine 237 to phenylalanine 257, isoleucine 264 to alanine 284, isoleucine 289 to valine 309, and glutamine 338 to leucine 358.

It belongs to the glycosyltransferase 4 family. MraY subfamily. It depends on Mg(2+) as a cofactor.

It is found in the cell inner membrane. The catalysed reaction is UDP-N-acetyl-alpha-D-muramoyl-L-alanyl-gamma-D-glutamyl-meso-2,6-diaminopimeloyl-D-alanyl-D-alanine + di-trans,octa-cis-undecaprenyl phosphate = di-trans,octa-cis-undecaprenyl diphospho-N-acetyl-alpha-D-muramoyl-L-alanyl-D-glutamyl-meso-2,6-diaminopimeloyl-D-alanyl-D-alanine + UMP. It functions in the pathway cell wall biogenesis; peptidoglycan biosynthesis. Catalyzes the initial step of the lipid cycle reactions in the biosynthesis of the cell wall peptidoglycan: transfers peptidoglycan precursor phospho-MurNAc-pentapeptide from UDP-MurNAc-pentapeptide onto the lipid carrier undecaprenyl phosphate, yielding undecaprenyl-pyrophosphoryl-MurNAc-pentapeptide, known as lipid I. This chain is Phospho-N-acetylmuramoyl-pentapeptide-transferase, found in Azorhizobium caulinodans (strain ATCC 43989 / DSM 5975 / JCM 20966 / LMG 6465 / NBRC 14845 / NCIMB 13405 / ORS 571).